A 215-amino-acid polypeptide reads, in one-letter code: Cytochrome b6 (215 aa).

The chain crosses the membrane as a helical span at residues 32–52; the sequence is IFYCLGGITLTCFIVQVATGF. Heme c is bound at residue C35. Heme b-binding residues include H86 and H100. The next 3 membrane-spanning stretches (helical) occupy residues 90-110, 116-136, and 186-206; these read ASMMVLNMILHVCRVYLTGGF, LTWVTGVLLASVTVSFGVTGY, and AHTFVLPVVAAVLMLTHFVMI. Positions 187 and 202 each coordinate heme b.

The protein belongs to the cytochrome b family. PetB subfamily. The 4 large subunits of the cytochrome b6-f complex are cytochrome b6, subunit IV (17 kDa polypeptide, PetD), cytochrome f and the Rieske protein, while the 4 small subunits are PetG, PetL, PetM and PetN. The complex functions as a dimer. Heme b serves as cofactor. It depends on heme c as a cofactor.

Its subcellular location is the plastid. It is found in the chloroplast thylakoid membrane. Its function is as follows. Component of the cytochrome b6-f complex, which mediates electron transfer between photosystem II (PSII) and photosystem I (PSI), cyclic electron flow around PSI, and state transitions. The sequence is that of Cytochrome b6 from Emiliania huxleyi (Coccolithophore).